Reading from the N-terminus, the 892-residue chain is Alanine--tRNA ligase (892 aa).

The Zn(2+) site is built by H596, H600, C700, and H704.

It belongs to the class-II aminoacyl-tRNA synthetase family. It depends on Zn(2+) as a cofactor.

The protein resides in the cytoplasm. The catalysed reaction is tRNA(Ala) + L-alanine + ATP = L-alanyl-tRNA(Ala) + AMP + diphosphate. In terms of biological role, catalyzes the attachment of alanine to tRNA(Ala) in a two-step reaction: alanine is first activated by ATP to form Ala-AMP and then transferred to the acceptor end of tRNA(Ala). Also edits incorrectly charged Ser-tRNA(Ala) and Gly-tRNA(Ala) via its editing domain. The polypeptide is Alanine--tRNA ligase (Methanococcus maripaludis (strain C5 / ATCC BAA-1333)).